Reading from the N-terminus, the 332-residue chain is Probable isoaspartyl peptidase/L-asparaginase CG7860 (332 aa).

The active-site Nucleophile is the threonine 188. Residues 216–219 and 239–242 contribute to the substrate site; these read RIGD and TGHG.

The protein belongs to the Ntn-hydrolase family. In terms of assembly, heterodimer of an alpha and beta chain produced by autocleavage. Cleaved into an alpha and beta chain by autocatalysis; this activates the enzyme. The N-terminal residue of the beta subunit is responsible for the nucleophile hydrolase activity.

The enzyme catalyses L-asparagine + H2O = L-aspartate + NH4(+). The catalysed reaction is Cleavage of a beta-linked Asp residue from the N-terminus of a polypeptide.. Its function is as follows. Has both L-asparaginase and beta-aspartyl peptidase activity. Does not have aspartylglucosaminidase activity and is inactive toward GlcNAc-L-Asn. Likewise, has no activity toward glutamine. The polypeptide is Probable isoaspartyl peptidase/L-asparaginase CG7860 (Drosophila melanogaster (Fruit fly)).